Here is a 542-residue protein sequence, read N- to C-terminus: Chaperonin GroEL (542 aa).

Residues 29–32, 86–90, Gly413, 476–478, and Asp492 each bind ATP; these read TLGP, DGTTT, and NAA.

The protein belongs to the chaperonin (HSP60) family. Forms a cylinder of 14 subunits composed of two heptameric rings stacked back-to-back. Interacts with the co-chaperonin GroES.

It localises to the cytoplasm. It carries out the reaction ATP + H2O + a folded polypeptide = ADP + phosphate + an unfolded polypeptide.. Its function is as follows. Together with its co-chaperonin GroES, plays an essential role in assisting protein folding. The GroEL-GroES system forms a nano-cage that allows encapsulation of the non-native substrate proteins and provides a physical environment optimized to promote and accelerate protein folding. The chain is Chaperonin GroEL from Streptococcus mutans serotype c (strain ATCC 700610 / UA159).